Consider the following 290-residue polypeptide: Large ribosomal subunit protein uL3 (290 aa).

Residue Q152 is modified to N5-methylglutamine. The segment at 250-290 (ARLAEEQAAAEAESLAQAEAEIAAEGSDAAPEGDADKKDGE) is disordered. A compositionally biased stretch (low complexity) spans 255-274 (EQAAAEAESLAQAEAEIAAE).

The protein belongs to the universal ribosomal protein uL3 family. Part of the 50S ribosomal subunit. Forms a cluster with proteins L14 and L19. Methylated by PrmB.

In terms of biological role, one of the primary rRNA binding proteins, it binds directly near the 3'-end of the 23S rRNA, where it nucleates assembly of the 50S subunit. This chain is Large ribosomal subunit protein uL3, found in Jannaschia sp. (strain CCS1).